Here is a 153-residue protein sequence, read N- to C-terminus: Pheromone-binding protein Gp-9 (153 aa).

The N-terminal stretch at 1 to 19 (MKTFVLHIFIFALVAFASA) is a signal peptide. Intrachain disulfides connect C37–C77, C73–C129, and C118–C138.

Belongs to the PBP/GOBP family. As to quaternary structure, homodimer.

It localises to the secreted. Colony queen number, a major feature of social organization, is associated with worker genotype for Gp-9. Colonies are headed by either a single reproductive queen (monogyne form) or multiple queens (polygyne form). Differences in worker Gp-9 genotypes between social forms may cause differences in workers' abilities to recognize queens and regulate their numbers. The sequence is that of Pheromone-binding protein Gp-9 from Solenopsis saevissima (Fire ant).